We begin with the raw amino-acid sequence, 80 residues long: KNGDLRAPYVEIFDARGCDAKNSQYTGPKSGDMNDDQCVKVSMAVPKVSEATAEKKRQEFLGFKETAINVPQIAGKTKKY.

Arginine 16 is a (2R,3E)-phycocyanobilin binding site. The mesobiliverdin site is built by cysteine 18, glutamine 24, tyrosine 25, and lysine 40. 2 residues coordinate 15,16-dihydrobiliverdin: proline 71 and isoleucine 73.

The protein belongs to the phycoerythrin family. As to quaternary structure, heterotetramer of 2 different alpha chains and 2 identical beta chains which form 2 alpha-beta heterodimers within the heterotetramer. Post-translationally, contains one phycocyanobilin chromophore, one mesobiliverdin chromophore and one 15,16-dihydrobiliverdin chromophore with binding mediated by both the alpha and beta subunits.

The protein resides in the plastid. The protein localises to the chloroplast thylakoid membrane. Light-harvesting photosynthetic tetrapyrrole chromophore-protein from the phycobiliprotein complex. This Chroomonas sp protein is Phycocyanin-645 alpha-1 chain.